Here is a 601-residue protein sequence, read N- to C-terminus: Aspartate--tRNA(Asp/Asn) ligase (601 aa).

An L-aspartate-binding site is contributed by Glu-177. Residues 201–204 (QLFK) form an aspartate region. Arg-223 contributes to the L-aspartate binding site. ATP contacts are provided by residues 223-225 (RDE) and Gln-232. Residue His-455 coordinates L-aspartate. Glu-489 is an ATP binding site. An L-aspartate-binding site is contributed by Arg-496. Position 541-544 (541-544 (GWDR)) interacts with ATP. The tract at residues 568-601 (VDPLTDAPAPIPLEQRRETGVDFKPKKKTDESAV) is disordered. Positions 581–601 (EQRRETGVDFKPKKKTDESAV) are enriched in basic and acidic residues.

It belongs to the class-II aminoacyl-tRNA synthetase family. Type 1 subfamily. In terms of assembly, homodimer.

It is found in the cytoplasm. The catalysed reaction is tRNA(Asx) + L-aspartate + ATP = L-aspartyl-tRNA(Asx) + AMP + diphosphate. Aspartyl-tRNA synthetase with relaxed tRNA specificity since it is able to aspartylate not only its cognate tRNA(Asp) but also tRNA(Asn). Reaction proceeds in two steps: L-aspartate is first activated by ATP to form Asp-AMP and then transferred to the acceptor end of tRNA(Asp/Asn). The polypeptide is Aspartate--tRNA(Asp/Asn) ligase (Corynebacterium diphtheriae (strain ATCC 700971 / NCTC 13129 / Biotype gravis)).